The primary structure comprises 380 residues: TPR repeat-containing thioredoxin TDX (380 aa).

N-acetylvaline is present on V2. Basic and acidic residues predominate over residues 49-59; sequence TERDYEDKAET. The interval 49-115 is disordered; the sequence is TERDYEDKAE…DENRDDAQSE (67 aa). The span at 69–91 shows a compositional bias: acidic residues; sequence DDDDDIMESDVELDNSDVVEPDN. Positions 106-115 are enriched in basic and acidic residues; the sequence is DENRDDAQSE. TPR repeat units follow at residues 112–145, 147–179, and 181–213; these read AQSE…NPTS, ILYA…NSDS, and KGYK…DYDE. The span at 240-263 shows a compositional bias: basic and acidic residues; it reads RKEKELQRAERERRKQQEAQEREA. The tract at residues 240 to 265 is disordered; it reads RKEKELQRAERERRKQQEAQEREAQA. Residues 252-378 form the Thioredoxin domain; that stretch reads RRKQQEAQER…LEQKIAQHSS (127 aa). Catalysis depends on nucleophile residues C304 and C307. An intrachain disulfide couples C304 to C307.

The protein belongs to the thioredoxin family. As to quaternary structure, oligomerization under high temperature.

Its function is as follows. Thiol-disulfide oxidoreductase that possesses insulin disulfide bonds reducing activity, disulfide reductase, foldase chaperone and holdase chaperone activities. Heat shock causes oligomerization and formation of high molecular weiht (HMW) complexes with concomitant functional switching from a disulfide reductase and foldase chaperone to a holdase chaperone. May interact with HSP70 proteins through the TPR repeats. This is TPR repeat-containing thioredoxin TDX (TDX) from Arabidopsis thaliana (Mouse-ear cress).